Reading from the N-terminus, the 203-residue chain is Guanylate kinase (203 aa).

One can recognise a Guanylate kinase-like domain in the interval 3 to 181; that stretch reads GTLYIVSAPS…ALDDLKAIFR (179 aa). ATP is bound at residue 10 to 17; the sequence is APSGAGKT.

This sequence belongs to the guanylate kinase family.

Its subcellular location is the cytoplasm. It catalyses the reaction GMP + ATP = GDP + ADP. In terms of biological role, essential for recycling GMP and indirectly, cGMP. The protein is Guanylate kinase (gmk) of Pseudomonas aeruginosa (strain ATCC 15692 / DSM 22644 / CIP 104116 / JCM 14847 / LMG 12228 / 1C / PRS 101 / PAO1).